The primary structure comprises 397 residues: Mannonate dehydratase (397 aa).

The protein belongs to the mannonate dehydratase family. Fe(2+) is required as a cofactor. It depends on Mn(2+) as a cofactor.

It carries out the reaction D-mannonate = 2-dehydro-3-deoxy-D-gluconate + H2O. It participates in carbohydrate metabolism; pentose and glucuronate interconversion. Functionally, catalyzes the dehydration of D-mannonate. This is Mannonate dehydratase from Yersinia pseudotuberculosis serotype O:1b (strain IP 31758).